The sequence spans 233 residues: MSVISMKQLLEAGVHFGHQTRRWNPKMAPYIFTERNGIYIIDLQKTVKKAEEAYNFVKQVAEEGKDILFVGTKKQAQEAIQEEAIRSNMHFVNNRWLGGMLTNFSTIRGRIRKLEQIEKMQEDGTFDVLPKKEVIKLKGEMEKLEKNLGGIRNLDASNVGAMFIVDPRKEKNAILEAKILGIPVVAIVDTNCDPEEVDYVIPGNDDAIRAVKLITAKMADAIMEGRQGEQLAE.

It belongs to the universal ribosomal protein uS2 family.

The protein is Small ribosomal subunit protein uS2 of Clostridium beijerinckii (strain ATCC 51743 / NCIMB 8052) (Clostridium acetobutylicum).